Consider the following 605-residue polypeptide: Tegument protein UL47 homolog (605 aa).

The tract at residues 1 to 75 (MATDNARPRS…DPWKLEPAND (75 aa)) is disordered. Basic residues predominate over residues 8-17 (PRSRSLRRKS). Residues 54-69 (GADRDPGTRRGIDPWK) show a composition bias toward basic and acidic residues.

This sequence belongs to the alphaherpesvirinae HHV-1 UL47 family. In terms of assembly, interacts with US3 kinase. Interacts with UL31 and UL34; these interactions seem important for efficient virion nuclear egress. Interacts with UL41/VHS. Post-translationally, phosphorylated by US3. This phosphorylation is required for proper nuclear localization.

It is found in the virion tegument. Its subcellular location is the host nucleus. The protein localises to the host cytoplasm. Tegument protein that can bind to various RNA transcripts. Plays a role in the attenuation of selective viral and cellular mRNA degradation by modulating the activity of host shutoff RNase UL41/VHS. Also plays a role in the primary envelopment of virions in the perinuclear space, probably by interacting with two nuclear egress proteins UL31 and UL34. The chain is Tegument protein UL47 homolog (sORF1) from Amazona oratrix (yellow-headed parrot).